A 97-amino-acid chain; its full sequence is Large ribosomal subunit protein eL21 (97 aa).

The disordered stretch occupies residues 1-23 (MTKMSKGPRSGSRRVMTKSVKNK).

This sequence belongs to the eukaryotic ribosomal protein eL21 family.

The protein is Large ribosomal subunit protein eL21 of Picrophilus torridus (strain ATCC 700027 / DSM 9790 / JCM 10055 / NBRC 100828 / KAW 2/3).